A 252-amino-acid chain; its full sequence is uncharacterized protein (252 aa).

The ABC transporter domain occupies 13-247; it reads ITLENVNKWY…PKSERTRAFL (235 aa). 45 to 52 contacts ATP; sequence GPSGSGKS.

The protein belongs to the ABC transporter superfamily.

It localises to the cell inner membrane. Its function is as follows. Probably part of a binding-protein-dependent transport system YdhWXYZ for an amino acid. Probably responsible for energy coupling to the transport system. This is an uncharacterized protein from Escherichia coli (strain K12).